Consider the following 581-residue polypeptide: Metal transporter Nramp7.1 (581 aa).

N-linked (GlcNAc...) asparagine glycosylation is found at Asn-11 and Asn-19. The next 7 membrane-spanning stretches (helical) occupy residues 57-77, 90-110, 146-166, 181-201, 224-244, 270-290, and 307-327; these read FLSY…PGNL, ELLW…SLAA, YCLW…EGII, LLIG…WVGV, LLIA…MSYV, IALL…ALVL, and YFLI…LAVI. N-linked (GlcNAc...) asparagine glycosylation occurs at Asn-338. The next 5 helical transmembrane spans lie at 370–390, 409–429, 434–454, 473–493, and 513–533; these read IYAI…TYAG, LVTR…GGSS, LIII…FALI, IYII…NIYY, and VFIG…VIYL. The segment at 551–581 is disordered; sequence PQQQANMENGLGPEMERVPYREDLADIPLPE. The segment covering 564-574 has biased composition (basic and acidic residues); the sequence is EMERVPYREDL.

The protein belongs to the NRAMP (TC 2.A.55) family.

It localises to the membrane. Its function is as follows. Probable divalent metal transporter. This chain is Metal transporter Nramp7.1, found in Populus trichocarpa (Western balsam poplar).